Reading from the N-terminus, the 286-residue chain is Beta-lactamase SHV-8 (286 aa).

The signal sequence occupies residues 1-21 (MRYIRLCIISLLATLPLAVHA). Serine 66 (acyl-ester intermediate) is an active-site residue. Cysteine 73 and cysteine 119 form a disulfide bridge. The Proton acceptor role is filled by glutamate 164. Residue 230 to 232 (KTG) coordinates substrate.

The protein belongs to the class-A beta-lactamase family.

It carries out the reaction a beta-lactam + H2O = a substituted beta-amino acid. SHV enzymes hydrolyze broad spectrum cephalosporins notably cefotaxime and ceftazidime. The polypeptide is Beta-lactamase SHV-8 (bla) (Escherichia coli).